The primary structure comprises 255 residues: 5'-nucleotidase SurE (255 aa).

Residues D8, D9, S39, and N91 each coordinate a divalent metal cation.

It belongs to the SurE nucleotidase family. A divalent metal cation is required as a cofactor.

It is found in the cytoplasm. The catalysed reaction is a ribonucleoside 5'-phosphate + H2O = a ribonucleoside + phosphate. Functionally, nucleotidase that shows phosphatase activity on nucleoside 5'-monophosphates. This chain is 5'-nucleotidase SurE, found in Acinetobacter baumannii (strain SDF).